We begin with the raw amino-acid sequence, 251 residues long: Adenosylcobinamide-GDP ribazoletransferase (251 aa).

A run of 6 helical transmembrane segments spans residues 36-56, 60-80, 110-130, 181-201, 202-222, and 231-251; these read LYPF…FVLS, VPIM…TGFL, VGAF…AGIF, EIIL…TLGI, NYLI…LKVK, and DVAG…LGII.

It belongs to the CobS family. Mg(2+) serves as cofactor.

It localises to the cell membrane. The catalysed reaction is alpha-ribazole + adenosylcob(III)inamide-GDP = adenosylcob(III)alamin + GMP + H(+). It catalyses the reaction alpha-ribazole 5'-phosphate + adenosylcob(III)inamide-GDP = adenosylcob(III)alamin 5'-phosphate + GMP + H(+). The protein operates within cofactor biosynthesis; adenosylcobalamin biosynthesis; adenosylcobalamin from cob(II)yrinate a,c-diamide: step 7/7. Functionally, joins adenosylcobinamide-GDP and alpha-ribazole to generate adenosylcobalamin (Ado-cobalamin). Also synthesizes adenosylcobalamin 5'-phosphate from adenosylcobinamide-GDP and alpha-ribazole 5'-phosphate. This Clostridium perfringens (strain SM101 / Type A) protein is Adenosylcobinamide-GDP ribazoletransferase.